We begin with the raw amino-acid sequence, 297 residues long: Protease HtpX homolog (297 aa).

Transmembrane regions (helical) follow at residues 5-25 and 43-63; these read IFLF…VLTI and LMAL…ISLG. His-154 lines the Zn(2+) pocket. The active site involves Glu-155. Position 158 (His-158) interacts with Zn(2+). The next 2 membrane-spanning stretches (helical) occupy residues 169 to 189 and 203 to 223; these read LLQG…AWVA and FIAM…VVFA. Zn(2+) is bound at residue Glu-229.

This sequence belongs to the peptidase M48B family. Requires Zn(2+) as cofactor.

It localises to the cell membrane. The polypeptide is Protease HtpX homolog (Bacillus velezensis (strain DSM 23117 / BGSC 10A6 / LMG 26770 / FZB42) (Bacillus amyloliquefaciens subsp. plantarum)).